We begin with the raw amino-acid sequence, 1077 residues long: Error-prone DNA polymerase (1077 aa).

Belongs to the DNA polymerase type-C family. DnaE2 subfamily.

It is found in the cytoplasm. It carries out the reaction DNA(n) + a 2'-deoxyribonucleoside 5'-triphosphate = DNA(n+1) + diphosphate. DNA polymerase involved in damage-induced mutagenesis and translesion synthesis (TLS). It is not the major replicative DNA polymerase. This Brucella melitensis biotype 1 (strain ATCC 23456 / CCUG 17765 / NCTC 10094 / 16M) protein is Error-prone DNA polymerase.